We begin with the raw amino-acid sequence, 266 residues long: GTP-binding protein Rhes (266 aa).

26–33 (GASRVGKS) lines the GTP pocket. An Effector region motif is present at residues 48 to 56 (YTPTIEDFH). GTP contacts are provided by residues 73–77 (DTSGN) and 140–143 (NKND). The segment at 189-235 (MAKLPHEMSPALHRKISVQYGDAFHPRPFCMRRVKEMDAYGMVSPFA) is interaction with GNB1, GNB2 and GNB3. Cysteine 263 bears the Cysteine methyl ester mark. Cysteine 263 carries S-farnesyl cysteine lipidation. The propeptide at 264-266 (TIQ) is removed in mature form.

Belongs to the small GTPase superfamily. RasD family. In terms of assembly, monomer (Potential). Interacts with PIK3CA and UBE2I. Interacts with GNB1, GNB2 and GNB3. Interacts with HTT; interacts with mutant HTT (mHTT) with a much higher affinity than wild type HTT. Post-translationally, farnesylated. Farnesylation is required for membrane targeting. As to expression, pancreatic endocrine cells (islets of Langerhans).

The protein resides in the cell membrane. Functionally, GTPase signaling protein that binds to and hydrolyzes GTP. Regulates signaling pathways involving G-proteins-coupled receptor and heterotrimeric proteins such as GNB1, GNB2 and GNB3. May be involved in selected striatal competencies, mainly locomotor activity and motor coordination. In Homo sapiens (Human), this protein is GTP-binding protein Rhes (RASD2).